The chain runs to 302 residues: Spheroidin-like protein (302 aa).

A signal peptide spans 1-19; that stretch reads MIALLIALFAAIHAPAVRS. Asn-193 and Asn-293 each carry an N-linked (GlcNAc...) asparagine; by host glycan.

In terms of assembly, homodimer; disulfide-linked.

The protein resides in the host membrane. Its function is as follows. Component of the virus occlusion bodies, which are large proteinaceous structures (polyhedra), that protect the virus from the outside environment for extended periods until they are ingested by insect larvae. The polypeptide is Spheroidin-like protein (SLP) (Autographa californica nuclear polyhedrosis virus (AcMNPV)).